We begin with the raw amino-acid sequence, 449 residues long: UDP-N-acetylglucosamine 1-carboxyvinyltransferase (449 aa).

Residue 51–52 (KN) coordinates phosphoenolpyruvate. UDP-N-acetyl-alpha-D-glucosamine is bound at residue Arg-121. Catalysis depends on Cys-145, which acts as the Proton donor. Position 145 is a 2-(S-cysteinyl)pyruvic acid O-phosphothioketal (Cys-145). UDP-N-acetyl-alpha-D-glucosamine contacts are provided by residues 150–154 (RPVDQ), Asp-333, and Ile-355.

Belongs to the EPSP synthase family. MurA subfamily.

The protein localises to the cytoplasm. It carries out the reaction phosphoenolpyruvate + UDP-N-acetyl-alpha-D-glucosamine = UDP-N-acetyl-3-O-(1-carboxyvinyl)-alpha-D-glucosamine + phosphate. It functions in the pathway cell wall biogenesis; peptidoglycan biosynthesis. Cell wall formation. Adds enolpyruvyl to UDP-N-acetylglucosamine. The protein is UDP-N-acetylglucosamine 1-carboxyvinyltransferase of Burkholderia mallei (strain ATCC 23344).